Consider the following 482-residue polypeptide: Glutamate--tRNA ligase (482 aa).

A 'HIGH' region motif is present at residues 10–20; the sequence is PSPTGFLHIGN. The 'KMSKS' region signature appears at 253-257; it reads KLSKR. ATP is bound at residue K256.

The protein belongs to the class-I aminoacyl-tRNA synthetase family. Glutamate--tRNA ligase type 1 subfamily. Monomer.

It localises to the cytoplasm. The enzyme catalyses tRNA(Glu) + L-glutamate + ATP = L-glutamyl-tRNA(Glu) + AMP + diphosphate. Catalyzes the attachment of glutamate to tRNA(Glu) in a two-step reaction: glutamate is first activated by ATP to form Glu-AMP and then transferred to the acceptor end of tRNA(Glu). The sequence is that of Glutamate--tRNA ligase from Mesoplasma florum (strain ATCC 33453 / NBRC 100688 / NCTC 11704 / L1) (Acholeplasma florum).